The sequence spans 562 residues: Protein wntless (562 aa).

Residues 1–13 (MSGTILENLSGRK) lie on the Cytoplasmic side of the membrane. The chain crosses the membrane as a helical span at residues 14 to 34 (LSILVGSLLLCQVLCFLLGGL). Residues 35–239 (YAPVPAGHTN…AIHQNGGFTH (205 aa)) lie on the Lumenal side of the membrane. N58 is a glycosylation site (N-linked (GlcNAc...) asparagine). A helical membrane pass occupies residues 240 to 260 (VWLMLKTLLFPFVVGIMVWFW). At 261 to 270 (RRVHLLQRSP) the chain is on the cytoplasmic side. Residues 271 to 291 (ALLEYMLLYLGGALTFLNLPL) form a helical membrane-spanning segment. Topologically, residues 292–311 (EYLSLTIEMPYMLLLSDIRQ) are lumenal. A helical membrane pass occupies residues 312 to 332 (GIFYAMLLSFWLVFAGEHMLI). The Cytoplasmic segment spans residues 333-344 (QDSHNKSTIRSR). Residues 345-365 (YWKHLSAVVVGCISLFVFDIS) form a helical membrane-spanning segment. Residues 366 to 386 (ERGVQLRNPFYSIWTTPLGAK) are Lumenal-facing. The chain crosses the membrane as a helical span at residues 387 to 407 (VAMSFILLAGVSAAVYFLFLC). Over 408-441 (YMISKVFKNIGDKRTSLPSMSQARRLHYEGLIYR) the chain is Cytoplasmic. Residues 442–462 (FKFLMLATLLCAALTVTGFIM) traverse the membrane as a helical segment. The Lumenal segment spans residues 463–482 (GQMAEGQWKWNDDVEIQLTS). The chain crosses the membrane as a helical span at residues 483 to 503 (AFLTGVYGMWNIYIFALLILY). The Cytoplasmic segment spans residues 504-562 (APSHKQWPTMHHSDETTQSNENIVASAASEEIEFSNLPSDSNPSEISSLTSFTRKVAFE). The disordered stretch occupies residues 538-562 (SNLPSDSNPSEISSLTSFTRKVAFE). Residues 539 to 556 (NLPSDSNPSEISSLTSFT) are compositionally biased toward polar residues.

This sequence belongs to the wntless family. In terms of assembly, interacts with wg; in the Golgi. Interacts with Vps35, a component of the retromer complex; wls stability is regulated by Vps35.

It localises to the presynaptic cell membrane. The protein localises to the postsynaptic cell membrane. It is found in the cell membrane. Its subcellular location is the endoplasmic reticulum membrane. The protein resides in the endosome membrane. It localises to the golgi apparatus membrane. In terms of biological role, a segment polarity gene required for wingless (wg)-dependent patterning processes, acting in both wg-sending cells and wg-target cells. In non-neuronal cells wls directs wg secretion. The wls traffic loop encompasses the Golgi, the cell surface, an endocytic compartment and a retrograde route leading back to the Golgi, and involves clathrin-mediated endocytosis and the retromer complex (a conserved protein complex consisting of Vps35 and Vps26). In neuronal cells (the larval motorneuron NMJ), the wg signal moves across the synapse via the release of wls-containing exosome-like vesicles. Postsynaptic wls is required for the trafficking of fz2 through the fz2-interacting protein Grip. The polypeptide is Protein wntless (Drosophila persimilis (Fruit fly)).